The sequence spans 810 residues: Volume-regulated anion channel subunit LRRC8A (810 aa).

Met-1 is subject to N-acetylmethionine. At 1–23 the chain is on the cytoplasmic side; the sequence is MIPVTELRYFADTQPAYRILKPW. The chain crosses the membrane as a helical span at residues 24–47; sequence WDVFTDYISIVMLMIAVFGGTLQV. The Extracellular portion of the chain corresponds to 48-123; that stretch reads TQDKMICLPC…YENRLHWFAK (76 aa). Cystine bridges form between Cys-54-Cys-310, Cys-57-Cys-65, and Cys-113-Cys-295. 2 N-linked (GlcNAc...) asparagine glycosylation sites follow: Asn-66 and Asn-83. The chain crosses the membrane as a helical span at residues 124–142; sequence YFPYLVLLHTLIFLACSNF. The Cytoplasmic portion of the chain corresponds to 143–264; it reads WFKFPRTSSK…EEGDIVYRLY (122 aa). Phosphothreonine is present on Thr-200. Ser-202 is modified (phosphoserine). Residue Thr-215 is modified to Phosphothreonine. Phosphoserine is present on Ser-217. Residues 265 to 286 form a helical membrane-spanning segment; the sequence is MRQTIIKVIKFILIICYTVYYV. Residues 287 to 316 are Extracellular-facing; it reads HNIKFDVDCTVDIESLTGYRTYRCAHPLAT. The helical transmembrane segment at 317-341 threads the bilayer; that stretch reads LFKILASFYISLVIFYGLICMYTLW. Residues 342 to 810 lie on the Cytoplasmic side of the membrane; the sequence is WMLRRSLKKY…RLWRADKEQA (469 aa). 17 LRR repeats span residues 399–422, 423–445, 447–468, 469–492, 493–515, 518–542, 543–565, 567–589, 590–613, 615–637, 639–661, 662–684, 686–707, 708–730, 732–753, 754–776, and 778–801; these read ENKLRQLNLNNEWTLDKLRQRLTK, NAQDKLELHLFMLSGIPDTVFDL, ELEVLKLELIPDVTIPPSIAQL, TGLKELWLYHTAAKIEAPALAFLR, ENLRALHIKFTDIKEIPLWIYSL, LEELHLTGNLSAENNRYIVIDGLRE, LKRLKVLRLKSNLSKLPQVVTDV, VHLQKLSINNEGTKLIVLNSLKK, MANLTELELIRCDLERIPHSIFSL, NLQEIDLKDNNLKTIEEIISFQH, HRLTCLKLWYNHIAYIPIQIGNL, TNLERLYLNRNKIEKIPTQLFYC, KLRYLDLSHNNLTFLPADIGLL, QNLQNLAITANRIETLPPELFQC, KLRALHLGNNVLQSLPSRVGEL, TNLTQIELRGNRLECLPVELGEC, and LLKRSGLVVEEDLFNTLPPEVKER. The Di-leucine motif motif lies at 706 to 707; the sequence is LL.

This sequence belongs to the LRRC8 family. Heterohexamer; oligomerizes with other LRRC8 proteins (LRRC8B, LRRC8C, LRRC8D and/or LRRC8E) to form a heterohexamer. Can form homohexamers in vitro, but these have lower conductance than heterohexamers. In vivo, the subunit composition may depend primarily on expression levels, and heterooligomeric channels containing various proportions of the different LRRC8 proteins may coexist. Interact with GRB2. Interacts with NOX4; this interaction prevents the ubiquitin-mediated degradation of LRRC8A. In terms of processing, N-glycosylated. Expressed in brain, kidney, ovary, lung, liver, heart, and fetal brain and liver. Found at high levels in bone marrow; lower levels are detected in peripheral blood cells. Expressed on T-cells as well as on B-lineage cells.

The protein resides in the cell membrane. It is found in the lysosome membrane. It catalyses the reaction chloride(in) = chloride(out). It carries out the reaction iodide(out) = iodide(in). The enzyme catalyses taurine(out) = taurine(in). The catalysed reaction is L-aspartate(out) = L-aspartate(in). It catalyses the reaction L-glutamate(out) = L-glutamate(in). It carries out the reaction myo-inositol(out) = myo-inositol(in). The enzyme catalyses 2',3'-cGAMP(out) = 2',3'-cGAMP(in). Its activity is regulated as follows. Inhibited by (4-[(2-butyl-6,7-dichloro-2-cyclopentyl-2,3-dihydro-1-oxo-1H-inden-5-yl)oxy]butanoic acid), which plugs the channel like a cork in a bottle by binding in the extracellular selectivity filter and sterically occluding ion conduction. Lipids may block conduction in closed heterohexameric channels. In terms of biological role, essential component of the volume-regulated anion channel (VRAC, also named VSOAC channel), an anion channel required to maintain a constant cell volume in response to extracellular or intracellular osmotic changes. The VRAC channel conducts iodide better than chloride and can also conduct organic osmolytes like taurine. Mediates efflux of amino acids, such as aspartate and glutamate, in response to osmotic stress. LRRC8A and LRRC8D are required for the uptake of the drug cisplatin. In complex with LRRC8C or LRRC8E, acts as a transporter of immunoreactive cyclic dinucleotide GMP-AMP (2'-3'-cGAMP), an immune messenger produced in response to DNA virus in the cytosol: mediates both import and export of 2'-3'-cGAMP, thereby promoting transfer of 2'-3'-cGAMP to bystander cells. In contrast, complexes containing LRRC8D inhibit transport of 2'-3'-cGAMP. Required for in vivo channel activity, together with at least one other family member (LRRC8B, LRRC8C, LRRC8D or LRRC8E); channel characteristics depend on the precise subunit composition. Can form functional channels by itself (in vitro). Involved in B-cell development: required for the pro-B cell to pre-B cell transition. Also required for T-cell development. Required for myoblast differentiation: VRAC activity promotes membrane hyperpolarization and regulates insulin-stimulated glucose metabolism and oxygen consumption. Also acts as a regulator of glucose-sensing in pancreatic beta cells: VRAC currents, generated in response to hypotonicity- or glucose-induced beta cell swelling, depolarize cells, thereby causing electrical excitation, leading to increase glucose sensitivity and insulin secretion. Also plays a role in lysosome homeostasis by forming functional lysosomal VRAC channels in response to low cytoplasmic ionic strength condition: lysosomal VRAC channels are necessary for the formation of large lysosome-derived vacuoles, which store and then expel excess water to maintain cytosolic water homeostasis. Acts as a key factor in NLRP3 inflammasome activation by modulating itaconate efflux and mitochondria function. The polypeptide is Volume-regulated anion channel subunit LRRC8A (Homo sapiens (Human)).